Here is a 343-residue protein sequence, read N- to C-terminus: Alpha-tocopherol transfer protein-like (343 aa).

A disordered region spans residues 1 to 29 (MSEESDSLRTSPSVASLSENELPLPPPDP). Positions 8 to 19 (LRTSPSVASLSE) are enriched in polar residues. The CRAL-TRIO domain maps to 118-283 (RPSALKDVLN…EYGGTAGELD (166 aa)).

May act as a protein that binds a hydrophobic ligand. The chain is Alpha-tocopherol transfer protein-like (Ttpal) from Mus musculus (Mouse).